Consider the following 96-residue polypeptide: Large ribosomal subunit protein bL27 (96 aa).

Residues 1–9 (MLRLDLQFF) constitute a propeptide that is removed on maturation. A disordered region spans residues 1–36 (MLRLDLQFFSTKKGQGSSKNGRDSESKRLGSKRADG). The segment covering 8 to 19 (FFSTKKGQGSSK) has biased composition (polar residues). A compositionally biased stretch (basic and acidic residues) spans 20–35 (NGRDSESKRLGSKRAD).

It belongs to the bacterial ribosomal protein bL27 family. In terms of processing, the N-terminus is cleaved by ribosomal processing cysteine protease Prp.

The polypeptide is Large ribosomal subunit protein bL27 (Oceanobacillus iheyensis (strain DSM 14371 / CIP 107618 / JCM 11309 / KCTC 3954 / HTE831)).